The chain runs to 310 residues: tRNA-splicing endonuclease subunit Sen34 (310 aa).

The segment at 119–177 (GQAAKKQKLEQASGASSSQEAGSSQAAKEDETSDGQASGEQEEAGPSSSQAGPSNGVAP) is disordered. Low complexity predominate over residues 128–144 (EQASGASSSQEAGSSQA). Residues tyrosine 247, histidine 255, and lysine 286 contribute to the active site.

Belongs to the tRNA-intron endonuclease family. TRNA splicing endonuclease is a heterotetramer composed of TSEN2, TSEN15, TSEN34/LENG5 and TSEN54. tRNA splicing endonuclease complex also contains proteins of the pre-mRNA 3'-end processing machinery such as CLP1, CPSF1, CPSF4 and CSTF2.

It localises to the nucleus. The protein localises to the nucleolus. It catalyses the reaction pretRNA = a 3'-half-tRNA molecule with a 5'-OH end + a 5'-half-tRNA molecule with a 2',3'-cyclic phosphate end + an intron with a 2',3'-cyclic phosphate and a 5'-hydroxyl terminus.. In terms of biological role, constitutes one of the two catalytic subunit of the tRNA-splicing endonuclease complex, a complex responsible for identification and cleavage of the splice sites in pre-tRNA. It cleaves pre-tRNA at the 5'- and 3'-splice sites to release the intron. The products are an intron and two tRNA half-molecules bearing 2',3'-cyclic phosphate and 5'-OH termini. There are no conserved sequences at the splice sites, but the intron is invariably located at the same site in the gene, placing the splice sites an invariant distance from the constant structural features of the tRNA body. It probably carries the active site for 3'-splice site cleavage. The tRNA splicing endonuclease is also involved in mRNA processing via its association with pre-mRNA 3'-end processing factors, establishing a link between pre-tRNA splicing and pre-mRNA 3'-end formation, suggesting that the endonuclease subunits function in multiple RNA-processing events. The protein is tRNA-splicing endonuclease subunit Sen34 (TSEN34) of Homo sapiens (Human).